Reading from the N-terminus, the 238-residue chain is MWASGSVKIPTHIAVIPDGNRRYAKKTGIDFYHAYKKGVEKVRNFLTWALEFRDIKNVTFFALSTENLQRSKIELEILFRIFEDELRRTLEDPLIHDNKVRVRFIGDRSLLPGKVVKYIDELESVTKNYSNYHLTIALGYGGRAEIVRCIKRVLSGEVRLETFSEEELFQCLDTRGIPNPEPDVVVRTGGEKRLSNFLLYQTAYSELIFLEKLWPEVEREDLVYIIEEYSRRQRRFGR.

Aspartate 18 is a catalytic residue. Position 18 (aspartate 18) interacts with Mg(2+). Substrate contacts are provided by residues 19 to 22 (GNRR) and 64 to 66 (STE). Asparagine 67 (proton acceptor) is an active-site residue. Substrate-binding positions include arginine 70, arginine 187, and 193-195 (RLS). Position 206 (glutamate 206) interacts with Mg(2+).

The protein belongs to the UPP synthase family. As to quaternary structure, homodimer. The cofactor is Mg(2+).

It carries out the reaction geranylgeranyl diphosphate + 7 isopentenyl diphosphate = tri-trans,hepta-cis-undecaprenyl diphosphate + 7 diphosphate. In terms of biological role, catalyzes the sequential condensation of isopentenyl diphosphate (IPP) with geranylgeranyl diphosphate (GGPP) to yield (2Z,6Z,10Z,14Z,18Z,22Z,26Z,30E,34E,38E)-undecaprenyl diphosphate (tritrans,heptacis-UPP). It is probably the precursor of glycosyl carrier lipids. The chain is Tritrans,polycis-undecaprenyl-diphosphate synthase (geranylgeranyl-diphosphate specific) from Pyrobaculum aerophilum (strain ATCC 51768 / DSM 7523 / JCM 9630 / CIP 104966 / NBRC 100827 / IM2).